The primary structure comprises 179 residues: Large ribosomal subunit protein uL6 (179 aa).

It belongs to the universal ribosomal protein uL6 family. In terms of assembly, part of the 50S ribosomal subunit.

This protein binds to the 23S rRNA, and is important in its secondary structure. It is located near the subunit interface in the base of the L7/L12 stalk, and near the tRNA binding site of the peptidyltransferase center. In Parasynechococcus marenigrum (strain WH8102), this protein is Large ribosomal subunit protein uL6.